Here is a 925-residue protein sequence, read N- to C-terminus: Probable replication restart protein PriA (925 aa).

Zn(2+) is bound by residues cysteine 645, cysteine 648, cysteine 654, cysteine 657, cysteine 672, cysteine 675, cysteine 685, and cysteine 688.

The protein belongs to the helicase family. PriA subfamily. Interacts with DnaB (DR_0549). Component of the replication restart primosome. Zn(2+) serves as cofactor.

In terms of biological role, initiates the restart of stalled replication forks, which reloads the replicative helicase on sites other than the origin of replication. Recognizes abandoned replication forks and remodels them to uncover a helicase loading site. Promotes assembly of the primosome at these replication forks. Recognizes and binds DNA at stalled replication forks, also binds single-stranded (ss)DNA. The sequence is that of Probable replication restart protein PriA from Deinococcus radiodurans (strain ATCC 13939 / DSM 20539 / JCM 16871 / CCUG 27074 / LMG 4051 / NBRC 15346 / NCIMB 9279 / VKM B-1422 / R1).